The chain runs to 432 residues: Adenylosuccinate synthetase (432 aa).

GTP-binding positions include 13-19 (GDEGKGK) and 41-43 (GHT). D14 (proton acceptor) is an active-site residue. Mg(2+) contacts are provided by D14 and G41. IMP is bound by residues 14–17 (DEGK), 39–42 (NAGH), T130, R144, Q225, T240, and R304. The active-site Proton donor is the H42. 300–306 (ATTGRKR) lines the substrate pocket. Residues R306, 332–334 (KLD), and 415–417 (STG) each bind GTP.

The protein belongs to the adenylosuccinate synthetase family. Homodimer. Requires Mg(2+) as cofactor.

Its subcellular location is the cytoplasm. It carries out the reaction IMP + L-aspartate + GTP = N(6)-(1,2-dicarboxyethyl)-AMP + GDP + phosphate + 2 H(+). The protein operates within purine metabolism; AMP biosynthesis via de novo pathway; AMP from IMP: step 1/2. Its function is as follows. Plays an important role in the de novo pathway of purine nucleotide biosynthesis. Catalyzes the first committed step in the biosynthesis of AMP from IMP. The sequence is that of Adenylosuccinate synthetase from Photobacterium profundum (strain SS9).